A 309-amino-acid polypeptide reads, in one-letter code: Protein FdhE homolog (309 aa).

The protein belongs to the FdhE family.

It localises to the cytoplasm. Its function is as follows. Necessary for formate dehydrogenase activity. The chain is Protein FdhE homolog from Yersinia pestis bv. Antiqua (strain Antiqua).